Here is a 939-residue protein sequence, read N- to C-terminus: Valine--tRNA ligase (939 aa).

Residues 47-57 (PNVTGILHMGH) carry the 'HIGH' region motif. A 'KMSKS' region motif is present at residues 563–567 (KLSKS). Lysine 566 serves as a coordination point for ATP. The stretch at 874–939 (EHLAKERVRL…QSILDKLASL (66 aa)) forms a coiled coil.

It belongs to the class-I aminoacyl-tRNA synthetase family. ValS type 1 subfamily. In terms of assembly, monomer.

Its subcellular location is the cytoplasm. The catalysed reaction is tRNA(Val) + L-valine + ATP = L-valyl-tRNA(Val) + AMP + diphosphate. In terms of biological role, catalyzes the attachment of valine to tRNA(Val). As ValRS can inadvertently accommodate and process structurally similar amino acids such as threonine, to avoid such errors, it has a 'posttransfer' editing activity that hydrolyzes mischarged Thr-tRNA(Val) in a tRNA-dependent manner. The protein is Valine--tRNA ligase of Chlamydia trachomatis serovar L2 (strain ATCC VR-902B / DSM 19102 / 434/Bu).